Reading from the N-terminus, the 733-residue chain is Cyclic nucleotide-gated channel (733 aa).

Disordered stretches follow at residues 1-33 and 67-95; these read MSTAEPAPDPTNPSTSGLAPTTNGIGSPPPTAS and PNGNSNAVQPAATGGQPASSDGGSAIEVP. Residues 1–125 are Cytoplasmic-facing; sequence MSTAEPAPDP…PSTDNFYYWT (125 aa). Residues 12-25 show a composition bias toward polar residues; that stretch reads NPSTSGLAPTTNGI. Residues 126 to 148 form a helical membrane-spanning segment; the sequence is CVVTVAYIYNLLFVIARQVFNDL. At 149–197 the chain is on the extracellular side; sequence IGPSSQSLCRFYNGTLNSTTQVECTYNMLTNMKEMPTYSQYPDLGWSKY. A helical membrane pass occupies residues 198 to 217; the sequence is WHFRMLWVFFDLLMDCVYLI. The Cytoplasmic segment spans residues 218-251; that stretch reads DTFLNYRMGYMDQGLVVREAEKVTKAYWQSKQYR. A helical transmembrane segment spans residues 252 to 265; that stretch reads IDGISLIPLDYILG. The Extracellular portion of the chain corresponds to 266 to 276; the sequence is WPIPYINWRGL. The helical transmembrane segment at 277–287 threads the bilayer; sequence PILRLNRLIRY. Residues 288 to 308 are Cytoplasmic-facing; sequence KRVRNCLERTETRSSMPNAFR. A helical membrane pass occupies residues 309–331; it reads VVVVVWYIVIIIHWNACLYFWIS. Topologically, residues 332 to 362 are extracellular; it reads EWIGLGTDAWVYGHLNKQSLPDDITDTLLRR. The next 2 helical transmembrane spans lie at 363-385 and 386-411; these read YVYSFYWSTLILTTIGEVPSPVR and NIEYAFVTLDLMCGVLIFATIVGNVG. Residues 376-379 are selectivity filter; sequence TIGE. Glu-379 is a Na(+) binding site. The Cytoplasmic segment spans residues 412-733; that stretch reads SMISNMSAAR…TGTESESLLK (322 aa). Residues 419–496 form a C-linker region; sequence AARTEFQNKM…TLRKVRIFQD (78 aa). The tract at residues 493 to 607 is cyclic nucleotide-binding domain; that stretch reads IFQDCEAGLL…ALREYPDARK (115 aa). Gly-559 contributes to the 3',5'-cyclic GMP binding site. Glu-560 is a binding site for 3',5'-cyclic AMP. Ser-562, Arg-575, Thr-576, Lys-619, and Asp-620 together coordinate 3',5'-cyclic GMP. Arg-575 serves as a coordination point for 3',5'-cyclic AMP. A disordered region spans residues 694–733; the sequence is SIDGGDISTDGVDERVRPPRLRQTKTIDLPTGTESESLLK.

Belongs to the cyclic nucleotide-gated cation channel (TC 1.A.1.5) family. Homotetramer. As to expression, expressed at the sensory endings of thermosensory, gustatory, and olfactory neurons.

The protein resides in the cell membrane. Its subcellular location is the cell projection. It localises to the cilium. The enzyme catalyses Ca(2+)(in) = Ca(2+)(out). The catalysed reaction is Na(+)(in) = Na(+)(out). It catalyses the reaction K(+)(in) = K(+)(out). Functionally, pore-forming subunit of the cyclic nucleotide-gated channel. Required for normal thermosensation and chemosensation sensory behavior. Required, downstream of receptor-type guanylate cyclase gcy-9, for CO2-mediated responses in BAG neurons. Required, downstream of receptor-type guanylate cyclase gcy-14, for alkaline pH-mediated responses in ASE-left (ASEL) neurons. Involved in the development of ASJ sensory neuron axon during late larval stages and in the maintenance of normal axon morphology in the adult. Regulates dauer formation. Required for the calcium flux to the cytoplasm in the ASJ sensory neurons upon the onset and removal of a nitric oxide (NO) stimulus, thereby promoting the ASJ-mediated behavioral avoidance response to NO-producing organisms like P.aeruginosa. In ASI and ASJ sensory neurons, controls behavioral response to P.aeruginosa by up-regulating the transcription of daf-7, a member of the TGF-beta family. In AWB and AWC sensory neurons, mediates the recognition of food odors which subsequently allows for the detection of preferred food sources. In AWC neurons, acts to promote expression of srsx-3, a member of the GPCR family. Binding to cGMP results in conformational changes at the hydrophobic gate that converts the protein from an inactive closed state to an active open state. The protein is Cyclic nucleotide-gated channel (tax-4) of Caenorhabditis elegans.